Here is a 147-residue protein sequence, read N- to C-terminus: MGGYEDIEGFHYGQEITFAADGRPALGYVSHTWWADEPRDGREPGSPLATETGFWRVQPGEDGGSVVEVTLAHPFGIAEIYVGTVTGTRVDLDHNVLIRTATARDVTRSVRLYGIVEGGDLAYAIDMEAEGKPLQSHLSARLHRVTD.

His-137 contacts heme b.

It belongs to the nitrobindin family. In terms of assembly, homodimer. It depends on heme b as a cofactor.

It catalyses the reaction peroxynitrite = nitrate. It participates in nitrogen metabolism. Its function is as follows. Heme-binding protein able to scavenge peroxynitrite and to protect free L-tyrosine against peroxynitrite-mediated nitration, by acting as a peroxynitrite isomerase that converts peroxynitrite to nitrate. Therefore, this protein likely plays a role in peroxynitrite sensing and in the detoxification of reactive nitrogen and oxygen species (RNS and ROS, respectively). Is able to bind nitric oxide (NO) in vitro, but may act as a sensor of peroxynitrite levels in vivo. This chain is Peroxynitrite isomerase, found in Frankia alni (strain DSM 45986 / CECT 9034 / ACN14a).